The sequence spans 173 residues: MRIKLNTEDIMRISLFEKMTGANVIDSTSDDEKIVFVVKEGDIGAAIGKGGENVKNATDKFGKKIDLIEYSEDLKQFIKNIFAPIELEDVWVKKFGNDLVVYVRVHPRLRRAIIGDKGKNIDRAVDIAGRLAGVKNIKVVAGLRKDADNRPKKDEIPEKAAESSENVQAEENQ.

Residues Asp31–Asn97 enclose the KH domain. The span at Ala147 to Glu162 shows a compositional bias: basic and acidic residues. Positions Ala147–Gln173 are disordered. Polar residues predominate over residues Ser163–Gln173.

Belongs to the NusA family.

It is found in the cytoplasm. In terms of biological role, participates in transcription termination. In Methanococcus vannielii (strain ATCC 35089 / DSM 1224 / JCM 13029 / OCM 148 / SB), this protein is Probable transcription termination protein NusA.